The following is a 406-amino-acid chain: Luteothin monooxygenase (406 aa).

Residues histidine 98, arginine 102, arginine 296, glycine 350, histidine 353, and cysteine 355 each coordinate heme b.

Belongs to the cytochrome P450 family. In terms of assembly, monomer. Heme b serves as cofactor.

The enzyme catalyses luteothin + 4 reduced [2Fe-2S]-[ferredoxin] + 2 O2 + 4 H(+) = aureothin + 4 oxidized [2Fe-2S]-[ferredoxin] + 3 H2O. Its pathway is antibiotic biosynthesis. It participates in polyketide biosynthesis. Its function is as follows. Bifunctional cytochrome P450 protein involved in the biosynthesis of the antibiotic aureothin, a nitroaryl polyketide metabolite with antifungal, cytotoxic and insecticidal activities. Catalyzes the hydroxylation of luteothin (also called deoxyaureothin), leading to the formation of the intermediate (7R)-7-hydroxydeoxyaureothin, followed by the formation of the aureothin tetrahydrofuran ring, the final step in the biosynthesis of aureothin. This is Luteothin monooxygenase from Streptomyces thioluteus.